The sequence spans 115 residues: UPF0102 protein NMA0341 (115 aa).

The protein belongs to the UPF0102 family.

In Neisseria meningitidis serogroup A / serotype 4A (strain DSM 15465 / Z2491), this protein is UPF0102 protein NMA0341.